Consider the following 447-residue polypeptide: tRNA(Ile)-lysidine synthase (447 aa).

Ser-31–Ser-36 contributes to the ATP binding site.

Belongs to the tRNA(Ile)-lysidine synthase family.

The protein resides in the cytoplasm. The enzyme catalyses cytidine(34) in tRNA(Ile2) + L-lysine + ATP = lysidine(34) in tRNA(Ile2) + AMP + diphosphate + H(+). Functionally, ligates lysine onto the cytidine present at position 34 of the AUA codon-specific tRNA(Ile) that contains the anticodon CAU, in an ATP-dependent manner. Cytidine is converted to lysidine, thus changing the amino acid specificity of the tRNA from methionine to isoleucine. This chain is tRNA(Ile)-lysidine synthase, found in Pseudothermotoga lettingae (strain ATCC BAA-301 / DSM 14385 / NBRC 107922 / TMO) (Thermotoga lettingae).